A 184-amino-acid polypeptide reads, in one-letter code: ATP synthase subunit b, chloroplastic (184 aa).

Residues 4–24 (IINLVIFSGYWPIAGNFGLNT) traverse the membrane as a helical segment.

It belongs to the ATPase B chain family. In terms of assembly, F-type ATPases have 2 components, F(1) - the catalytic core - and F(0) - the membrane proton channel. F(1) has five subunits: alpha(3), beta(3), gamma(1), delta(1), epsilon(1). F(0) has four main subunits: a(1), b(1), b'(1) and c(10-14). The alpha and beta chains form an alternating ring which encloses part of the gamma chain. F(1) is attached to F(0) by a central stalk formed by the gamma and epsilon chains, while a peripheral stalk is formed by the delta, b and b' chains.

The protein localises to the plastid. Its subcellular location is the chloroplast thylakoid membrane. In terms of biological role, f(1)F(0) ATP synthase produces ATP from ADP in the presence of a proton or sodium gradient. F-type ATPases consist of two structural domains, F(1) containing the extramembraneous catalytic core and F(0) containing the membrane proton channel, linked together by a central stalk and a peripheral stalk. During catalysis, ATP synthesis in the catalytic domain of F(1) is coupled via a rotary mechanism of the central stalk subunits to proton translocation. Its function is as follows. Component of the F(0) channel, it forms part of the peripheral stalk, linking F(1) to F(0). The polypeptide is ATP synthase subunit b, chloroplastic (Physcomitrium patens (Spreading-leaved earth moss)).